A 318-amino-acid chain; its full sequence is Cell growth regulator with EF hand domain protein 1 (318 aa).

Positions 1-19 (MLPLTMTVLILLLLPTGQA) are cleaved as a signal peptide. EF-hand domains lie at 69 to 104 (SREQ…ALAP) and 114 to 149 (PVIL…ALRH). Residues aspartate 82, aspartate 84, serine 86, glutamine 88, glutamate 93, aspartate 127, asparagine 129, aspartate 131, and glutamate 138 each coordinate Ca(2+). Residues 177-318 (LRQETQEAPG…HIVQVENDEI (142 aa)) are disordered. Composition is skewed to basic and acidic residues over residues 186–202 (GPRE…RESL) and 223–233 (GEAEGQAEAKG). A run of 3 repeats spans residues 219-235 (PGPR…KGDA), 236-252 (PGPR…EGDA), and 253-269 (PGPR…EGDA). The segment at 219-286 (PGPRGEAEGQ…GGQAEARENG (68 aa)) is 4 X 17 AA approximate tandem repeats of P-G-P-R-G-E-A-G-G-Q-A-E-A-[KR]-G-D-A. The segment covering 235 to 272 (APGPRGEAGGQAEAEGDAPGPRGEAGGQAEAEGDAPGP) has biased composition (low complexity). A 4; approximate repeat occupies 270-286 (PGPRGEAGGQAEARENG). Residues 281 to 293 (EARENGEEAKELP) show a composition bias toward basic and acidic residues.

Post-translationally, probably digested extracellularly by an unknown serine protease generating extremely hydrophobic bioactive peptides.

It localises to the secreted. Mediates cell-cell adhesion in a calcium-dependent manner. Able to inhibit growth in several cell lines. In Homo sapiens (Human), this protein is Cell growth regulator with EF hand domain protein 1.